Here is a 324-residue protein sequence, read N- to C-terminus: Beta-ketoacyl-[acyl-carrier-protein] synthase III (324 aa).

Residues Cys116 and His251 contribute to the active site. An ACP-binding region spans residues 252–256; the sequence is QANLR. The active site involves Asn281.

This sequence belongs to the thiolase-like superfamily. FabH family. As to quaternary structure, homodimer.

The protein localises to the cytoplasm. It carries out the reaction malonyl-[ACP] + acetyl-CoA + H(+) = 3-oxobutanoyl-[ACP] + CO2 + CoA. The protein operates within lipid metabolism; fatty acid biosynthesis. Its function is as follows. Catalyzes the condensation reaction of fatty acid synthesis by the addition to an acyl acceptor of two carbons from malonyl-ACP. Catalyzes the first condensation reaction which initiates fatty acid synthesis and may therefore play a role in governing the total rate of fatty acid production. Possesses both acetoacetyl-ACP synthase and acetyl transacylase activities. Its substrate specificity determines the biosynthesis of branched-chain and/or straight-chain of fatty acids. In Xylella fastidiosa (strain 9a5c), this protein is Beta-ketoacyl-[acyl-carrier-protein] synthase III.